The primary structure comprises 345 residues: UPF0324 membrane protein HH_1161 (345 aa).

10 helical membrane-spanning segments follow: residues 7–29 (GFLY…SATL), 33–50 (LSPL…SPFY), 90–112 (LGLN…AIFI), 122–141 (ISLL…ILAL), 154–176 (VALG…IYYA), 186–208 (WGIF…AISP), 215–237 (IIVK…YIIF), 262–281 (LYIP…NSFI), 293–312 (FASK…QIDW), and 322–344 (TFAL…VYIM).

This sequence belongs to the UPF0324 family.

It is found in the cell membrane. The protein is UPF0324 membrane protein HH_1161 of Helicobacter hepaticus (strain ATCC 51449 / 3B1).